A 516-amino-acid chain; its full sequence is Histidine ammonia-lyase 1 (516 aa).

Residues 147–149 (SSG) constitute a cross-link (5-imidazolinone (Ser-Gly)). The residue at position 148 (S148) is a 2,3-didehydroalanine (Ser).

This sequence belongs to the PAL/histidase family. Contains an active site 4-methylidene-imidazol-5-one (MIO), which is formed autocatalytically by cyclization and dehydration of residues Ser-Ser-Gly.

The protein localises to the cytoplasm. It catalyses the reaction L-histidine = trans-urocanate + NH4(+). The protein operates within amino-acid degradation; L-histidine degradation into L-glutamate; N-formimidoyl-L-glutamate from L-histidine: step 1/3. This Fusobacterium nucleatum subsp. nucleatum (strain ATCC 25586 / DSM 15643 / BCRC 10681 / CIP 101130 / JCM 8532 / KCTC 2640 / LMG 13131 / VPI 4355) protein is Histidine ammonia-lyase 1 (hutH1).